Reading from the N-terminus, the 93-residue chain is Acylphosphatase (93 aa).

Residues Lys3 to Tyr93 form the Acylphosphatase-like domain. Catalysis depends on residues Arg18 and Asn36.

The protein belongs to the acylphosphatase family.

It catalyses the reaction an acyl phosphate + H2O = a carboxylate + phosphate + H(+). The protein is Acylphosphatase (acyP) of Borrelia garinii subsp. bavariensis (strain ATCC BAA-2496 / DSM 23469 / PBi) (Borreliella bavariensis).